Consider the following 265-residue polypeptide: Undecaprenyl-diphosphatase 1 (265 aa).

The next 7 membrane-spanning stretches (helical) occupy residues 4 to 24, 42 to 62, 84 to 104, 108 to 128, 184 to 204, 217 to 237, and 245 to 265; these read IIIA…PISS, AKTF…ILYH, FHVF…HDVI, LFQP…MIFA, SEFS…LDLL, MFAV…VTFL, and LKPF…FVLL.

This sequence belongs to the UppP family.

It is found in the cell membrane. The enzyme catalyses di-trans,octa-cis-undecaprenyl diphosphate + H2O = di-trans,octa-cis-undecaprenyl phosphate + phosphate + H(+). Its function is as follows. Catalyzes the dephosphorylation of undecaprenyl diphosphate (UPP). Confers resistance to bacitracin. This is Undecaprenyl-diphosphatase 1 from Bacillus thuringiensis (strain Al Hakam).